The chain runs to 136 residues: Transport protein particle 20 kDa subunit (136 aa).

Belongs to the TRAPP small subunits family. Sedlin subfamily.

The protein resides in the cytoplasm. Its subcellular location is the golgi apparatus. It is found in the cis-Golgi network. It localises to the endoplasmic reticulum. Functionally, component of the TRAPP I and TRAPP II complexes. TRAPP I plays a key role in the late stages of endoplasmic reticulum to Golgi traffic. TRAPP II seems to play a role in intra-Golgi transport. This chain is Transport protein particle 20 kDa subunit (trs20), found in Schizosaccharomyces pombe (strain 972 / ATCC 24843) (Fission yeast).